The chain runs to 193 residues: Oligoribonuclease (193 aa).

The region spanning Leu8–Leu171 is the Exonuclease domain. Tyr129 is a catalytic residue.

It belongs to the oligoribonuclease family.

It localises to the cytoplasm. In terms of biological role, 3'-to-5' exoribonuclease specific for small oligoribonucleotides. This Alkalilimnicola ehrlichii (strain ATCC BAA-1101 / DSM 17681 / MLHE-1) protein is Oligoribonuclease.